We begin with the raw amino-acid sequence, 309 residues long: GATA transcription factor 25 (309 aa).

The segment at M1–P35 is disordered. Residues I8–A18 are compositionally biased toward polar residues. Residues P77–G112 enclose the Tify domain. Residues R146–S188 form the CCT domain. Residues S187–D202 are compositionally biased toward polar residues. The segment at S187–D207 is disordered. A GATA-type zinc finger spans residues A208–K267. Residues E290–H309 form a disordered region. Over residues S293 to H309 the composition is skewed to polar residues.

It belongs to the type IV zinc-finger family. Class C subfamily. In terms of tissue distribution, predominantly expressed in shoot apices, inflorescences and roots.

The protein localises to the nucleus. Its function is as follows. Transcriptional activator that specifically binds 5'-GATA-3' or 5'-GAT-3' motifs within gene promoters. In Arabidopsis thaliana (Mouse-ear cress), this protein is GATA transcription factor 25 (GATA25).